Consider the following 676-residue polypeptide: Envelope glycoprotein (676 aa).

A signal peptide spans M1–S32. Topologically, residues I33–Q650 are extracellular. N40 carries an N-linked (GlcNAc...) asparagine; by host glycan. 5 disulfide bridges follow: C53–C609, C108–C135, C121–C147, C511–C556, and C601–C608. A receptor-binding region spans residues R54–E201. Residues N204, N228, N238, N257, N268, N296, N317, N333, N346, N386, and N413 are each glycosylated (N-linked (GlcNAc...) asparagine; by host). The tract at residues E305 to T485 is mucin-like region. The span at R314–T335 shows a compositional bias: polar residues. The disordered stretch occupies residues R314–E337. 2 disordered regions span residues T373–P392 and T402–L479. Residues A414 to A427 are compositionally biased toward low complexity. 3 N-linked (GlcNAc...) asparagine; by host glycosylation sites follow: N436, N454, and N462. A compositionally biased stretch (polar residues) spans A447 to T464. The tract at residues G524–A539 is fusion peptide. Residues L554–Q595 adopt a coiled-coil conformation. N563 carries N-linked (GlcNAc...) asparagine; by host glycosylation. Positions W615–T634 form a coiled coil. N618 is a glycosylation site (N-linked (GlcNAc...) asparagine; by host). Residues W651–I671 traverse the membrane as a helical segment. S-palmitoyl cysteine; by host attachment occurs at residues C670 and C672. Residues C672–F676 are Cytoplasmic-facing.

This sequence belongs to the filoviruses glycoprotein family. As to quaternary structure, homotrimer; each monomer consists of a GP1 and a GP2 subunit linked by disulfide bonds. The resulting peplomers (GP1,2) protrude from the virus surface as spikes. Interacts with host integrin alpha-V/ITGAV. Interacts with host CLEC10A. Binds also to host CD209 and CLEC4M/DC-SIGN(R). Interacts with host FOLR1. Interacts with BST2; this interaction inhibits the antiviral effect of BST2 and this allows viral release from infected cells. Interacts with host FCN1; this interaction enhances viral entry. Interacts with host TLR4; this interaction induces cell death in T-lymphocytes or proinflammatory cytokines and SOCS1 production in monocytes. Interacts with host entry receptor NPC1. In terms of assembly, GP1 and GP2delta are part of GP1,2delta soluble complexes released by ectodomain shedding. In terms of processing, the signal peptide region modulates GP's high mannose glycosylation, thereby determining the efficiency of the interactions with DC-SIGN(R). Post-translationally, N-glycosylated. O-glycosylated in the mucin-like region. In terms of processing, palmitoylation of GP2 is not required for its function. Post-translationally, specific enzymatic cleavages in vivo yield mature proteins. The precursor is processed into GP1 and GP2 by host cell furin in the trans Golgi, and maybe by other host proteases, to yield the mature GP1 and GP2 proteins. The cleavage site corresponds to the furin optimal cleavage sequence [KR]-X-[KR]-R. This cleavage does not seem to be required for function. After the internalization of the virus into cell endosomes, GP1 C-terminus is removed by the endosomal proteases cathepsin B, cathepsin L, or both, leaving a 19-kDa N-terminal fragment which is further digested by cathepsin B. Proteolytic processing of GP1,2 by host ADAM17 can remove the transmembrane anchor of GP2 and leads to shedding of complexes consisting in GP1 and truncated GP2 (GP1,2delta).

Its subcellular location is the virion membrane. The protein resides in the host cell membrane. The protein localises to the secreted. Trimeric GP1,2 complexes form the virion surface spikes and mediate the viral entry processes, with GP1 acting as the receptor-binding subunit and GP2 as the membrane fusion subunit. At later times of infection, down-regulates the expression of various host cell surface molecules that are essential for immune surveillance and cell adhesion. Down-modulates several integrins including ITGA1, ITGA2, ITGA3, ITGA4, ITGA5, ITGA6, ITGAV and ITGB1. This decrease in cell adhesion molecules may lead to cell detachment, contributing to the disruption of blood vessel integrity and hemorrhages developed during infection (cytotoxicity). Interacts with host TLR4 and thereby stimulates the differentiation and activation of monocytes leading to bystander death of T-lymphocytes. Down-regulates as well the function of host natural killer cells. Counteracts the antiviral effect of host BST2/tetherin that restricts release of progeny virions from infected cells. However, cooperates with VP40 and host BST2 to activate canonical NF-kappa-B pathway in a manner dependent on neddylation. Its function is as follows. Functions as a decoy for anti-GP1,2 antibodies thereby contributing to viral immune evasion. Interacts and activates host macrophages and dendritic cells inducing up-regulation of cytokine transcription. This effect is mediated throught activation of host TLR4. Functionally, responsible for binding to the receptor(s) on target cells. Interacts with CD209/DC-SIGN and CLEC4M/DC-SIGNR which act as cofactors for virus entry into dendritic cells (DCs) and endothelial cells. Binding to the macrophage specific lectin CLEC10A also seems to enhance virus infectivity. Interaction with FOLR1/folate receptor alpha may be a cofactor for virus entry in some cell types, although results are contradictory. Members of the Tyro3 receptor tyrosine kinase family also seem to be cell entry factors in filovirus infection. Once attached, the virions are internalized through clathrin-dependent endocytosis and/or macropinocytosis. After internalization of the virus into the endosomes of the host cell, proteolysis of GP1 by two cysteine proteases, CTSB/cathepsin B and CTSL/cathepsin L removes the glycan cap and allows GP1 binding to the host entry receptor NPC1. NPC1-binding, Ca(2+) and acidic pH induce a conformational change of GP2, which unmasks its fusion peptide and permit membranes fusion. In terms of biological role, acts as a class I viral fusion protein. Under the current model, the protein has at least 3 conformational states: pre-fusion native state, pre-hairpin intermediate state, and post-fusion hairpin state. During viral and target cell membrane fusion, the coiled coil regions (heptad repeats) assume a trimer-of-hairpins structure, positioning the fusion peptide in close proximity to the C-terminal region of the ectodomain. The formation of this structure appears to drive apposition and subsequent fusion of viral and target cell membranes. Responsible for penetration of the virus into the cell cytoplasm by mediating the fusion of the membrane of the endocytosed virus particle with the endosomal membrane. Low pH in endosomes induces an irreversible conformational change in GP2, releasing the fusion hydrophobic peptide. This chain is Envelope glycoprotein (GP), found in Epomops franqueti (Franquet's epauletted fruit bat).